Reading from the N-terminus, the 351-residue chain is Phenylalanine--tRNA ligase alpha subunit (351 aa).

Residue E266 coordinates Mg(2+).

It belongs to the class-II aminoacyl-tRNA synthetase family. Phe-tRNA synthetase alpha subunit type 1 subfamily. In terms of assembly, tetramer of two alpha and two beta subunits. Mg(2+) is required as a cofactor.

Its subcellular location is the cytoplasm. The enzyme catalyses tRNA(Phe) + L-phenylalanine + ATP = L-phenylalanyl-tRNA(Phe) + AMP + diphosphate + H(+). The protein is Phenylalanine--tRNA ligase alpha subunit of Anaplasma marginale (strain St. Maries).